The sequence spans 462 residues: Annexin A7 (462 aa).

The interval 1-130 (MSYPPNQGYP…QGYPPQQGYP (130 aa)) is disordered. The tract at residues 7-131 (QGYPPQSNSP…GYPPQQGYPP (125 aa)) is 19 X 6 AA tandem repeats of Q-G-Y-P-P-Q. Positions 16–130 (PQPGQYGAPQ…QGYPPQQGYP (115 aa)) are enriched in low complexity. Annexin repeat units follow at residues 161-232 (HDCK…ALLT), 233-304 (EPAH…KLTE), 315-388 (MQVS…AIVT), and 392-462 (NPYG…DIIS).

It belongs to the annexin family.

Calcium/phospholipid-binding protein which promotes membrane fusion and is involved in exocytosis. In Dictyostelium discoideum (Social amoeba), this protein is Annexin A7 (nxnA).